We begin with the raw amino-acid sequence, 907 residues long: Avirulence protein A (907 aa).

2 stretches are compositionally biased toward polar residues: residues Met1–Leu11 and Ala124–Pro136. 2 disordered regions span residues Met1 to Leu47 and Asn116 to Tyr157.

This chain is Avirulence protein A (avrA), found in Pseudomonas savastanoi pv. glycinea (Pseudomonas syringae pv. glycinea).